A 501-amino-acid chain; its full sequence is Acyl-CoA-binding domain-containing protein 5A (501 aa).

An ACB domain is found at 9–98 (YEQRFNAAVK…LKLILESMPV (90 aa)). An acyl-CoA contacts are provided by residues 20-29 (IQNLPPNGSF), 40-44 (YSYYK), K66, and Y85. Residues 173 to 405 (IDLEDREDDD…GERWGADGPM (233 aa)) are disordered. Residues 176 to 195 (EDREDDDDEDEEGERDEVEE) are compositionally biased toward acidic residues. The segment covering 219-235 (SNGSISQHKGLSNGTHG) has biased composition (polar residues). 3 stretches are compositionally biased toward basic and acidic residues: residues 236–254 (SKSDLNRQESEENTEHMNH), 266–283 (NSEKDKEEDVSSSHHVAS), and 328–366 (RSQDDELLGREEGVQHGGEDGRGSRGGAQRRELPVKRSD). Residues 376 to 389 (SRSPASGSGSAGPQ) show a composition bias toward low complexity. A coiled-coil region spans residues 406–437 (TENLNEQIICALARLQDDMQSVLQRLHTLEAL). A helical transmembrane segment spans residues 465 to 485 (WWPFDVSLGTVAFAVVWPFVV).

It belongs to the ATG37 family.

It localises to the membrane. Its function is as follows. Acyl-CoA binding protein which acts as the peroxisome receptor for pexophagy but is dispensable for aggrephagy and nonselective autophagy. Binds medium- and long-chain acyl-CoA esters. This Danio rerio (Zebrafish) protein is Acyl-CoA-binding domain-containing protein 5A (acbd5a).